A 105-amino-acid polypeptide reads, in one-letter code: UPF0060 membrane protein Rmet_4032 (105 aa).

4 consecutive transmembrane segments (helical) span residues 4–24, 28–48, 60–80, and 82–102; these read VGLY…PYLW, GASP…AWLL, AAYG…VDGV, and PSPW…IIVF.

Belongs to the UPF0060 family.

Its subcellular location is the cell inner membrane. The protein is UPF0060 membrane protein Rmet_4032 of Cupriavidus metallidurans (strain ATCC 43123 / DSM 2839 / NBRC 102507 / CH34) (Ralstonia metallidurans).